The primary structure comprises 1024 residues: Nardilysin-like (1024 aa).

Positions 41–103 are disordered; the sequence is PDIYPEGSVP…DEVKGKGDHQ (63 aa). Acidic residues predominate over residues 52–95; it reads QIDEDDEDGEEEDSDGSSEDDDDDEDDEEDGEGDEEDEDEDEDE. Histidine 129 provides a ligand contact to Zn(2+). Residue glutamate 132 is the Proton acceptor of the active site. A Zn(2+)-binding site is contributed by histidine 133. The active site involves glutamate 203. Glutamate 210 provides a ligand contact to Zn(2+).

Belongs to the peptidase M16 family. The cofactor is Zn(2+).

It carries out the reaction Hydrolysis of polypeptides, preferably at -Xaa-|-Arg-Lys-, and less commonly at -Arg-|-Arg-Xaa-, in which Xaa is not Arg or Lys.. Its function is as follows. Cleaves peptide substrates on the N-terminus of arginine residues in dibasic pairs. The protein is Nardilysin-like of Arabidopsis thaliana (Mouse-ear cress).